The chain runs to 255 residues: F-box only protein 44 (255 aa).

Residues 3 to 50 (VGNINELPENILLELFIHIPARQLLLRCRPVCSLWRDLIDLVTLWKRK) enclose the F-box domain. Positions 71–252 (FYFLRSLQRN…VTNSSITIGP (182 aa)) constitute an FBA domain.

In terms of assembly, part of a SCF (SKP1-cullin-F-box) protein ligase complex. Interacts with SKP1 and CUL1. In terms of tissue distribution, expressed in brain, liver, pancreas and adipose tissue (at protein level). Widely expressed.

Its function is as follows. Substrate-recognition component of the SCF (SKP1-CUL1-F-box protein)-type E3 ubiquitin ligase complex. In Mus musculus (Mouse), this protein is F-box only protein 44 (Fbxo44).